Reading from the N-terminus, the 309-residue chain is Isethionate sulfite-lyase activating enzyme (309 aa).

Positions 22 to 309 (HDGPGIRTVV…VVAAEHATDG (288 aa)) constitute a Radical SAM core domain. C36, C40, C43, C62, C68, C71, C75, C95, C98, C102, and C106 together coordinate [4Fe-4S] cluster. 42–44 (WCS) is an S-adenosyl-L-methionine binding site. 4Fe-4S ferredoxin-type domains follow at residues 53–85 (IELA…RADD) and 86–117 (DTIS…YGTT). S-adenosyl-L-methionine is bound by residues G146, 195 to 197 (DIK), and H268.

This sequence belongs to the organic radical-activating enzymes family. In terms of assembly, monomer. [4Fe-4S] cluster is required as a cofactor.

The enzyme catalyses glycyl-[protein] + reduced [flavodoxin] + S-adenosyl-L-methionine = glycin-2-yl radical-[protein] + semiquinone [flavodoxin] + 5'-deoxyadenosine + L-methionine + H(+). It functions in the pathway organosulfur degradation; alkanesulfonate degradation. In terms of biological role, involved in an anaerobic respiration pathway that converts the sulfonate isethionate (2-hydroxyethanesulfonate) to ammonia, acetate and sulfide. Catalyzes activation of the isethionate sulfite-lyase IslA under anaerobic conditions by generation of an organic free radical on a glycine residue, via a homolytic cleavage of S-adenosyl-L-methionine (SAM). The sequence is that of Isethionate sulfite-lyase activating enzyme from Oleidesulfovibrio alaskensis (strain ATCC BAA-1058 / DSM 17464 / G20) (Desulfovibrio alaskensis).